A 152-amino-acid chain; its full sequence is MGLKLNELSPGVGAKKTAHRKGRGIGSGLGKTGGRGVKGQKSRSGSGVRRGFEGGQMPLFRRVPKFGFTSQMALTTAEVRLSELNKIDGDVVSVETLKAANIIRHDMKRARIILSGEITKAYTFKGVKVTKGAKAAIEAAGGTVEVTEGTEE.

Residues 1-54 (MGLKLNELSPGVGAKKTAHRKGRGIGSGLGKTGGRGVKGQKSRSGSGVRRGFEG) are disordered. The span at 24 to 37 (GIGSGLGKTGGRGV) shows a compositional bias: gly residues.

This sequence belongs to the universal ribosomal protein uL15 family. Part of the 50S ribosomal subunit.

In terms of biological role, binds to the 23S rRNA. This chain is Large ribosomal subunit protein uL15, found in Psychrobacter sp. (strain PRwf-1).